The chain runs to 1368 residues: DNA-directed RNA polymerase subunit beta (1368 aa).

Belongs to the RNA polymerase beta chain family. The RNAP catalytic core consists of 2 alpha, 1 beta, 1 beta' and 1 omega subunit. When a sigma factor is associated with the core the holoenzyme is formed, which can initiate transcription.

The enzyme catalyses RNA(n) + a ribonucleoside 5'-triphosphate = RNA(n+1) + diphosphate. Functionally, DNA-dependent RNA polymerase catalyzes the transcription of DNA into RNA using the four ribonucleoside triphosphates as substrates. The protein is DNA-directed RNA polymerase subunit beta of Burkholderia thailandensis (strain ATCC 700388 / DSM 13276 / CCUG 48851 / CIP 106301 / E264).